A 374-amino-acid polypeptide reads, in one-letter code: Ribosomal RNA large subunit methyltransferase G (374 aa).

It belongs to the methyltransferase superfamily. RlmG family.

The protein localises to the cytoplasm. It carries out the reaction guanosine(1835) in 23S rRNA + S-adenosyl-L-methionine = N(2)-methylguanosine(1835) in 23S rRNA + S-adenosyl-L-homocysteine + H(+). Functionally, specifically methylates the guanine in position 1835 (m2G1835) of 23S rRNA. This chain is Ribosomal RNA large subunit methyltransferase G, found in Pseudomonas paraeruginosa (strain DSM 24068 / PA7) (Pseudomonas aeruginosa (strain PA7)).